The sequence spans 649 residues: L-ornithine N(5)-monooxygenase (649 aa).

Residues 72-80 (EKRGHFAWH) and Q91 contribute to the FAD site. Position 96 (K96) interacts with substrate. V157 is a binding site for FAD. Residues 289–292 (AGQS) and R314 contribute to the NADP(+) site. Substrate contacts are provided by residues 328 to 331 (NSAA) and N359. Residue 359-361 (NYS) participates in NADP(+) binding. Positions 512 to 547 (AMQSDAVRSGKSSPGSGSDASSTSSQQTLASENSTE) are disordered. The span at 520–536 (SGKSSPGSGSDASSTSS) shows a compositional bias: low complexity. The segment covering 537–547 (QQTLASENSTE) has biased composition (polar residues). An FAD-binding site is contributed by 569–571 (SLL). Residue S572 coordinates substrate. The disordered stretch occupies residues 585–611 (LLQRLPRTRRGTASSAATQPAASTVAS). Over residues 596–611 (TASSAATQPAASTVAS) the composition is skewed to low complexity.

This sequence belongs to the lysine N(6)-hydroxylase/L-ornithine N(5)-oxygenase family. As to quaternary structure, homotetramer. FAD serves as cofactor.

It carries out the reaction L-ornithine + NADPH + O2 = N(5)-hydroxy-L-ornithine + NADP(+) + H2O. The enzyme catalyses L-ornithine + NADH + O2 = N(5)-hydroxy-L-ornithine + NAD(+) + H2O. The protein operates within siderophore biosynthesis; ferrichrome biosynthesis. Catalyzes the conversion of L-ornithine to N(5)-hydroxyornithine, the first step in the biosynthesis of all hydroxamate-containing siderophores, such as ferrichrome. This is L-ornithine N(5)-monooxygenase (SID1) from Mycosarcoma maydis (Corn smut fungus).